The chain runs to 170 residues: Adenine phosphoribosyltransferase (170 aa).

This sequence belongs to the purine/pyrimidine phosphoribosyltransferase family. In terms of assembly, homodimer.

The protein resides in the cytoplasm. The catalysed reaction is AMP + diphosphate = 5-phospho-alpha-D-ribose 1-diphosphate + adenine. It participates in purine metabolism; AMP biosynthesis via salvage pathway; AMP from adenine: step 1/1. Functionally, catalyzes a salvage reaction resulting in the formation of AMP, that is energically less costly than de novo synthesis. The protein is Adenine phosphoribosyltransferase of Geobacillus thermodenitrificans (strain NG80-2).